The sequence spans 273 residues: Cell division protein FtsQ (273 aa).

The Cytoplasmic portion of the chain corresponds to 1 to 20 (MPPRKAHTTRRTPAKKSGVR). A helical membrane pass occupies residues 21 to 43 (RRLLRLLVTGVPVLALCGVAWLW). The Periplasmic portion of the chain corresponds to 44 to 273 (LESVRLTRIE…STQKSAMGHE (230 aa)). Residues 47–115 (VRLTRIEIVG…GTLRIAVEER (69 aa)) form the POTRA domain.

This sequence belongs to the FtsQ/DivIB family. FtsQ subfamily.

The protein resides in the cell inner membrane. In terms of biological role, essential cell division protein. The protein is Cell division protein FtsQ of Rhodothermus marinus (strain ATCC 43812 / DSM 4252 / R-10) (Rhodothermus obamensis).